The following is a 244-amino-acid chain: Small ribosomal subunit protein uS3 (244 aa).

Residues 38-106 (IRKYLNARLA…DIQINIFEVK (69 aa)) form the KH type-2 domain. The segment at 217 to 244 (TQSKESGRGNNGGNNGGGKNFKRKKNNR) is disordered. The span at 225-235 (GNNGGNNGGGK) shows a compositional bias: gly residues.

The protein belongs to the universal ribosomal protein uS3 family. As to quaternary structure, part of the 30S ribosomal subunit. Forms a tight complex with proteins S10 and S14.

Its function is as follows. Binds the lower part of the 30S subunit head. Binds mRNA in the 70S ribosome, positioning it for translation. The sequence is that of Small ribosomal subunit protein uS3 from Bacteroides fragilis (strain ATCC 25285 / DSM 2151 / CCUG 4856 / JCM 11019 / LMG 10263 / NCTC 9343 / Onslow / VPI 2553 / EN-2).